Here is a 109-residue protein sequence, read N- to C-terminus: UPF0482 protein ESA_01750 (109 aa).

Residues 1–24 (MNKFLRHSLLLALLTGALSGVANA) form the signal peptide. The segment covering 38-55 (RTRQDAAMDKEQWNDTRS) has biased composition (basic and acidic residues). A disordered region spans residues 38–63 (RTRQDAAMDKEQWNDTRSLRQKVNKR).

It belongs to the UPF0482 family.

This chain is UPF0482 protein ESA_01750, found in Cronobacter sakazakii (strain ATCC BAA-894) (Enterobacter sakazakii).